The following is a 285-amino-acid chain: Probable E3 ubiquitin-protein ligase IE1 (285 aa).

At 1-201 (MASKDSDVRC…LPGYWDRDDR (201 aa)) the chain is on the cytoplasmic side. The RING-CH-type zinc finger occupies 124–183 (SIDEEGKQCWICRDGESLPEARYCNCYGDLQYCHEECLKTWISMSGEKKCKFCQTPYKVN). Residues Cys132, Cys135, Cys147, Cys149, His157, Cys160, Cys173, and Cys176 each contribute to the Zn(2+) site. The helical transmembrane segment at 202–222 (FVFIAGFIGMGTILAGWIASF) threads the bilayer. The Extracellular portion of the chain corresponds to 223 to 238 (FYLLVVLCGKYFTYKD). A helical transmembrane segment spans residues 239-259 (VMIVVGGLAIIQVVGLMFSLF). Residues 260–285 (MYFQIGNLLRQYINYMTETNIDPLRT) are Cytoplasmic-facing.

It localises to the membrane. It catalyses the reaction S-ubiquitinyl-[E2 ubiquitin-conjugating enzyme]-L-cysteine + [acceptor protein]-L-lysine = [E2 ubiquitin-conjugating enzyme]-L-cysteine + N(6)-ubiquitinyl-[acceptor protein]-L-lysine.. It participates in protein modification; protein ubiquitination. Functionally, controls the expression of later classes of genes and also of the IE genes (Potential). E3 ubiquitin-protein ligase. E3 ubiquitin ligases accept ubiquitin from an E2 ubiquitin-conjugating enzyme in the form of a thioester and then directly transfer the ubiquitin to targeted substrates. This chain is Probable E3 ubiquitin-protein ligase IE1 (IE1), found in Bovine herpesvirus 4 (strain DN-599) (BoHV-4).